Reading from the N-terminus, the 209-residue chain is COP9 signalosome complex subunit 8 (209 aa).

The 172-residue stretch at 8-179 folds into the PCI domain; that stretch reads ESAFSFKKLL…GALDVSFNKF (172 aa). Serine 175 bears the Phosphoserine mark.

The protein belongs to the CSN8 family. As to quaternary structure, component of the CSN complex, composed of COPS1/GPS1, COPS2, COPS3, COPS4, COPS5, COPS6, COPS7 (COPS7A or COPS7B), COPS8 and COPS9. In the complex, it probably interacts directly with COPS3, COPS4 and COPS7 (COPS7A or COPS7B).

The protein localises to the cytoplasm. Its subcellular location is the nucleus. In terms of biological role, component of the COP9 signalosome complex (CSN), a complex involved in various cellular and developmental processes. The CSN complex is an essential regulator of the ubiquitin (Ubl) conjugation pathway by mediating the deneddylation of the cullin subunits of SCF-type E3 ligase complexes, leading to decrease the Ubl ligase activity of SCF-type complexes such as SCF, CSA or DDB2. The complex is also involved in phosphorylation of p53/TP53, c-jun/JUN, IkappaBalpha/NFKBIA, ITPK1 and IRF8/ICSBP, possibly via its association with CK2 and PKD kinases. CSN-dependent phosphorylation of TP53 and JUN promotes and protects degradation by the Ubl system, respectively. The protein is COP9 signalosome complex subunit 8 (COPS8) of Pongo abelii (Sumatran orangutan).